The chain runs to 145 residues: Putative pre-16S rRNA nuclease (145 aa).

This sequence belongs to the YqgF nuclease family.

The protein localises to the cytoplasm. Functionally, could be a nuclease involved in processing of the 5'-end of pre-16S rRNA. This Prochlorococcus marinus (strain MIT 9211) protein is Putative pre-16S rRNA nuclease.